The chain runs to 412 residues: Peptidase T (412 aa).

His-83 provides a ligand contact to Zn(2+). The active site involves Asp-85. Asp-145 contacts Zn(2+). Residue Glu-179 is the Proton acceptor of the active site. Zn(2+) contacts are provided by Glu-180, Asp-202, and His-384.

Belongs to the peptidase M20B family. It depends on Zn(2+) as a cofactor.

The protein resides in the cytoplasm. The enzyme catalyses Release of the N-terminal residue from a tripeptide.. Functionally, cleaves the N-terminal amino acid of tripeptides. The sequence is that of Peptidase T from Fusobacterium nucleatum subsp. nucleatum (strain ATCC 25586 / DSM 15643 / BCRC 10681 / CIP 101130 / JCM 8532 / KCTC 2640 / LMG 13131 / VPI 4355).